We begin with the raw amino-acid sequence, 280 residues long: Pantothenate synthetase (280 aa).

32-39 (MGALHAGH) provides a ligand contact to ATP. H39 (proton donor) is an active-site residue. Residue Q63 participates in (R)-pantoate binding. A beta-alanine-binding site is contributed by Q63. An ATP-binding site is contributed by 149-152 (GEKD). A (R)-pantoate-binding site is contributed by Q155. Residues V178 and 186–189 (MSSR) contribute to the ATP site.

This sequence belongs to the pantothenate synthetase family. As to quaternary structure, homodimer.

It is found in the cytoplasm. The catalysed reaction is (R)-pantoate + beta-alanine + ATP = (R)-pantothenate + AMP + diphosphate + H(+). It participates in cofactor biosynthesis; (R)-pantothenate biosynthesis; (R)-pantothenate from (R)-pantoate and beta-alanine: step 1/1. Functionally, catalyzes the condensation of pantoate with beta-alanine in an ATP-dependent reaction via a pantoyl-adenylate intermediate. This Ruegeria sp. (strain TM1040) (Silicibacter sp.) protein is Pantothenate synthetase.